Consider the following 214-residue polypeptide: Lazarillo protein (214 aa).

An N-terminal signal peptide occupies residues M1–S21. 7 N-linked (GlcNAc...) asparagine glycosylation sites follow: N38, N74, N84, N90, N130, N158, and N161. A192 is lipidated: GPI-anchor amidated alanine. Positions G193–H214 are cleaved as a propeptide — removed in mature form.

It belongs to the calycin superfamily. Lipocalin family. N-glycosylated. In terms of processing, contains disulfide bonds. As to expression, expressed by a subset of neuroblasts, ganglion mother cells and neurons of the CNS; by all sensory neurons of the PNS.

Its subcellular location is the cell membrane. In terms of biological role, putative role in axonal outgrowth and guidance, required for the navigation of identified commissural neurons. Could be a receptor the midline morphogen. This chain is Lazarillo protein, found in Schistocerca americana (American grasshopper).